The sequence spans 186 residues: MAAENPSVSGVSGRYATALFELARDEKAVDAVKADLDRFKAMLADSPELTRLVRSPVFSAETQSKALAAVLDKAGFAGTTAKFLKVLTANRRLFTVTDVIRAYGALVAKFKGEATADVTVAEPLSEKNLDALKTALKSVTGKDVALNVNVDPAIIGGLVVKLGSRMVDSSLRTKLNSIKHAMKEAG.

Belongs to the ATPase delta chain family. F-type ATPases have 2 components, F(1) - the catalytic core - and F(0) - the membrane proton channel. F(1) has five subunits: alpha(3), beta(3), gamma(1), delta(1), epsilon(1). CF(0) has four main subunits: a(1), b(1), b'(1) and c(10-14). The alpha and beta chains form an alternating ring which encloses part of the gamma chain. F(1) is attached to F(0) by a central stalk formed by the gamma and epsilon chains, while a peripheral stalk is formed by the delta, b and b' chains.

The protein localises to the cell inner membrane. In terms of biological role, f(1)F(0) ATP synthase produces ATP from ADP in the presence of a proton or sodium gradient. F-type ATPases consist of two structural domains, F(1) containing the extramembraneous catalytic core and F(0) containing the membrane proton channel, linked together by a central stalk and a peripheral stalk. During catalysis, ATP synthesis in the catalytic domain of F(1) is coupled via a rotary mechanism of the central stalk subunits to proton translocation. This protein is part of the stalk that links CF(0) to CF(1). It either transmits conformational changes from CF(0) to CF(1) or is implicated in proton conduction. The sequence is that of ATP synthase subunit delta from Rhodopseudomonas palustris (strain BisB18).